We begin with the raw amino-acid sequence, 531 residues long: UDP-glucuronosyltransferase 1A5 (531 aa).

The signal sequence occupies residues 1-25; sequence MGLHVTLQGLAGLLLLLYALPWAEG. Asparagine 116, asparagine 131, asparagine 139, asparagine 293, and asparagine 431 each carry an N-linked (GlcNAc...) asparagine glycan. A helical transmembrane segment spans residues 489–505; it reads VIGFLLAIVLTVVFIVY.

Belongs to the UDP-glycosyltransferase family. In terms of assembly, homodimer. Homooligomer. Interacts with UGT1A1, UGT1A3, UGT1A4, UGT1A6, UGT1A7, UGT1A8, UGT1A9 and UGT1A10 to form heterodimers.

Its subcellular location is the endoplasmic reticulum membrane. It carries out the reaction glucuronate acceptor + UDP-alpha-D-glucuronate = acceptor beta-D-glucuronoside + UDP + H(+). The catalysed reaction is zolasartan + UDP-alpha-D-glucuronate = zolarsartan-1-N-beta-D-glucuronide + UDP. Its function is as follows. UDP-glucuronosyltransferase (UGT) that catalyzes phase II biotransformation reactions in which lipophilic substrates are conjugated with glucuronic acid to increase the metabolite's water solubility, thereby facilitating excretion into either the urine or bile. Essential for the elimination and detoxification of drugs, xenobiotics and endogenous compounds. Involved in the glucuronidation of the AGTR1 angiotensin receptor antagonist zolarsatan, a drug which can inhibit the effect of angiotensin II. The sequence is that of UDP-glucuronosyltransferase 1A5 from Rattus norvegicus (Rat).